The following is a 445-amino-acid chain: Methyl-CpG-binding domain protein 4-like protein (445 aa).

Asp-429 is a catalytic residue.

As to expression, isoform 1 and isoform 4: Expressed in leaves and flowers, but not in roots or stems.

The protein resides in the nucleus. Its function is as follows. Monofunctional DNA glycosylase targeting U:G and T:G mispairs. Excises uracil derivatives and exhibits a preference for a CpG sequence context, irrespective of the methylation status of the complementary strand. The activity follows a biphasic kinetics, with an initial burst of product accumulation followed by a slower phase. Specifically binds its reaction product. Triggers the base excision repair (BER) pathway. This Arabidopsis thaliana (Mouse-ear cress) protein is Methyl-CpG-binding domain protein 4-like protein.